Reading from the N-terminus, the 443-residue chain is ATP-dependent protease ATPase subunit HslU (443 aa).

ATP-binding positions include I20, 62–67 (GVGKTE), D255, E321, and R393.

It belongs to the ClpX chaperone family. HslU subfamily. A double ring-shaped homohexamer of HslV is capped on each side by a ring-shaped HslU homohexamer. The assembly of the HslU/HslV complex is dependent on binding of ATP.

The protein localises to the cytoplasm. Its function is as follows. ATPase subunit of a proteasome-like degradation complex; this subunit has chaperone activity. The binding of ATP and its subsequent hydrolysis by HslU are essential for unfolding of protein substrates subsequently hydrolyzed by HslV. HslU recognizes the N-terminal part of its protein substrates and unfolds these before they are guided to HslV for hydrolysis. This chain is ATP-dependent protease ATPase subunit HslU, found in Helicobacter acinonychis (strain Sheeba).